Reading from the N-terminus, the 124-residue chain is RTLRDLLREQHSKEDSERLMEQQGALLKRLAEADSEKARLLLLLQDKDKEVEELLQEIQCEKAQAKTASELSKSMESMRGHLQAQLRCKEAENSRLCMQIKNLERSGNQHKAEVEAIMEQLKEL.

Residues K13–L124 are a coiled coil.

The protein belongs to the ODF2 family. Self-associates. Associates with microtubules and forms a fibrillar structure partially linked to the microtubule network. Interacts through its C-terminus with PLK1. Interacts with ODF1. Interacts with MARK4; the interaction is required for localization of ODF2 to centrioles. Interacts with TSSK4. Interacts with AKNA. Interacts with QRICH2. Interacts with CFAP58. Interacts with BBOF1. Interacts with CCDC38. Interacts with CCDC42. Tyrosine phosphorylated. Detected in sperm flagella (at protein level).

The protein localises to the cytoplasm. It localises to the cytoskeleton. The protein resides in the microtubule organizing center. It is found in the centrosome. Its subcellular location is the cell projection. The protein localises to the cilium. It localises to the centriole. The protein resides in the spindle pole. It is found in the flagellum. Seems to be a major component of sperm tail outer dense fibers (ODF). ODFs are filamentous structures located on the outside of the axoneme in the midpiece and principal piece of the mammalian sperm tail and may help to maintain the passive elastic structures and elastic recoil of the sperm tail. May have a modulating influence on sperm motility. Functions as a general scaffold protein that is specifically localized at the distal/subdistal appendages of mother centrioles. Component of the centrosome matrix required for the localization of PLK1 and NIN to the centrosomes. Required for the formation and/or maintenance of normal CETN1 assembly. The chain is Outer dense fiber protein 2 from Mesocricetus auratus (Golden hamster).